Reading from the N-terminus, the 1083-residue chain is DNA-directed RNA polymerase subunit beta (1083 aa).

Belongs to the RNA polymerase beta chain family. As to quaternary structure, in plastids the minimal PEP RNA polymerase catalytic core is composed of four subunits: alpha, beta, beta', and beta''. When a (nuclear-encoded) sigma factor is associated with the core the holoenzyme is formed, which can initiate transcription.

It localises to the plastid. It is found in the chloroplast. It catalyses the reaction RNA(n) + a ribonucleoside 5'-triphosphate = RNA(n+1) + diphosphate. Its function is as follows. DNA-dependent RNA polymerase catalyzes the transcription of DNA into RNA using the four ribonucleoside triphosphates as substrates. The sequence is that of DNA-directed RNA polymerase subunit beta from Acorus calamus var. americanus (American sweet flag).